The chain runs to 89 residues: Small ribosomal subunit protein uS15 (89 aa).

It belongs to the universal ribosomal protein uS15 family. As to quaternary structure, part of the 30S ribosomal subunit. Forms a bridge to the 50S subunit in the 70S ribosome, contacting the 23S rRNA.

One of the primary rRNA binding proteins, it binds directly to 16S rRNA where it helps nucleate assembly of the platform of the 30S subunit by binding and bridging several RNA helices of the 16S rRNA. In terms of biological role, forms an intersubunit bridge (bridge B4) with the 23S rRNA of the 50S subunit in the ribosome. This is Small ribosomal subunit protein uS15 from Anoxybacillus flavithermus (strain DSM 21510 / WK1).